A 370-amino-acid polypeptide reads, in one-letter code: Protein STRICTOSIDINE SYNTHASE-LIKE 4 (370 aa).

The first 21 residues, 1–21 (MVLFFSTRFLFFSIFFPCLIS), serve as a signal peptide directing secretion. The N-linked (GlcNAc...) asparagine glycan is linked to Asn-101. A Phosphotyrosine modification is found at Tyr-303.

Belongs to the strictosidine synthase family.

Its subcellular location is the vacuole. This chain is Protein STRICTOSIDINE SYNTHASE-LIKE 4, found in Arabidopsis thaliana (Mouse-ear cress).